Here is a 176-residue protein sequence, read N- to C-terminus: Lipoprotein signal peptidase (176 aa).

3 consecutive transmembrane segments (helical) span residues 12–32 (WYWMVVLVFIADQLSKQWVLA), 67–87 (WQRWFFTFVAVGFSTLLTIWL), and 94–116 (MWRLNLAYTLVIGGALGNLIDRL). Active-site residues include Asp123 and Asp141. A helical membrane pass occupies residues 137–157 (FNIADSAICVGAALIIIDSII).

This sequence belongs to the peptidase A8 family.

The protein resides in the cell inner membrane. It catalyses the reaction Release of signal peptides from bacterial membrane prolipoproteins. Hydrolyzes -Xaa-Yaa-Zaa-|-(S,diacylglyceryl)Cys-, in which Xaa is hydrophobic (preferably Leu), and Yaa (Ala or Ser) and Zaa (Gly or Ala) have small, neutral side chains.. Its pathway is protein modification; lipoprotein biosynthesis (signal peptide cleavage). Its function is as follows. This protein specifically catalyzes the removal of signal peptides from prolipoproteins. The polypeptide is Lipoprotein signal peptidase (Shewanella woodyi (strain ATCC 51908 / MS32)).